A 457-amino-acid polypeptide reads, in one-letter code: Exodeoxyribonuclease 7 large subunit (457 aa).

The protein belongs to the XseA family. Heterooligomer composed of large and small subunits.

The protein resides in the cytoplasm. The enzyme catalyses Exonucleolytic cleavage in either 5'- to 3'- or 3'- to 5'-direction to yield nucleoside 5'-phosphates.. Its function is as follows. Bidirectionally degrades single-stranded DNA into large acid-insoluble oligonucleotides, which are then degraded further into small acid-soluble oligonucleotides. The polypeptide is Exodeoxyribonuclease 7 large subunit (Photorhabdus laumondii subsp. laumondii (strain DSM 15139 / CIP 105565 / TT01) (Photorhabdus luminescens subsp. laumondii)).